The following is a 95-amino-acid chain: Glutamyl-tRNA(Gln) amidotransferase subunit C (95 aa).

It belongs to the GatC family. In terms of assembly, heterotrimer of A, B and C subunits.

The enzyme catalyses L-glutamyl-tRNA(Gln) + L-glutamine + ATP + H2O = L-glutaminyl-tRNA(Gln) + L-glutamate + ADP + phosphate + H(+). It catalyses the reaction L-aspartyl-tRNA(Asn) + L-glutamine + ATP + H2O = L-asparaginyl-tRNA(Asn) + L-glutamate + ADP + phosphate + 2 H(+). In terms of biological role, allows the formation of correctly charged Asn-tRNA(Asn) or Gln-tRNA(Gln) through the transamidation of misacylated Asp-tRNA(Asn) or Glu-tRNA(Gln) in organisms which lack either or both of asparaginyl-tRNA or glutaminyl-tRNA synthetases. The reaction takes place in the presence of glutamine and ATP through an activated phospho-Asp-tRNA(Asn) or phospho-Glu-tRNA(Gln). The polypeptide is Glutamyl-tRNA(Gln) amidotransferase subunit C (Rhizobium meliloti (strain 1021) (Ensifer meliloti)).